The primary structure comprises 201 residues: Dephospho-CoA kinase (201 aa).

Residues 4-201 (IIGITGGIAS…LEGGRQDDRD (198 aa)) form the DPCK domain. Residue 12-17 (ASGKST) participates in ATP binding.

Belongs to the CoaE family.

The protein resides in the cytoplasm. The enzyme catalyses 3'-dephospho-CoA + ATP = ADP + CoA + H(+). Its pathway is cofactor biosynthesis; coenzyme A biosynthesis; CoA from (R)-pantothenate: step 5/5. Its function is as follows. Catalyzes the phosphorylation of the 3'-hydroxyl group of dephosphocoenzyme A to form coenzyme A. This Streptococcus pneumoniae (strain ATCC BAA-255 / R6) protein is Dephospho-CoA kinase.